The chain runs to 172 residues: Large ribosomal subunit protein uL10 (172 aa).

Belongs to the universal ribosomal protein uL10 family. As to quaternary structure, part of the ribosomal stalk of the 50S ribosomal subunit. The N-terminus interacts with L11 and the large rRNA to form the base of the stalk. The C-terminus forms an elongated spine to which L12 dimers bind in a sequential fashion forming a multimeric L10(L12)X complex.

Functionally, forms part of the ribosomal stalk, playing a central role in the interaction of the ribosome with GTP-bound translation factors. This chain is Large ribosomal subunit protein uL10, found in Brucella suis (strain ATCC 23445 / NCTC 10510).